Consider the following 113-residue polypeptide: Iron-sulfur cluster insertion protein ErpA (113 aa).

The iron-sulfur cluster site is built by cysteine 41, cysteine 105, and cysteine 107.

The protein belongs to the HesB/IscA family. In terms of assembly, homodimer. Requires iron-sulfur cluster as cofactor.

Its function is as follows. Required for insertion of 4Fe-4S clusters for at least IspG. This chain is Iron-sulfur cluster insertion protein ErpA, found in Mannheimia succiniciproducens (strain KCTC 0769BP / MBEL55E).